A 271-amino-acid polypeptide reads, in one-letter code: Dioscorin dioA3 (271 aa).

The signal sequence occupies residues 1–21 (MSSSTLLHLLLLSSLLFSCLS). Positions 28-262 (DEFSYIEGNP…TNFRSVFYFE (235 aa)) constitute an Alpha-carbonic anhydrase domain. A disulfide bridge connects residues Cys-53 and Cys-212. His-94 acts as the Proton acceptor in catalysis. L-ascorbate is bound by residues Asp-95, 120–122 (HFH), Gln-139, and 208–209 (TA).

This sequence belongs to the alpha-carbonic anhydrase family. In terms of assembly, monomer. Homodimer. Not glycosylated. Expressed in tuber (at protein level).

It carries out the reaction hydrogencarbonate + H(+) = CO2 + H2O. The enzyme catalyses 2 monodehydro-L-ascorbate radical + NADH + H(+) = 2 L-ascorbate + NAD(+). Its activity is regulated as follows. The carbonate dehydratase activity is not substantially changed by the addition of Zn(2+). Functionally, storage protein of tuber. Involved in protection against oxidative stress. Has carbonate dehydratase, trypsin inhibitor, dehydroascorbate (DHA) reductase and monodehydroascorbate (MDA) reductase activities. Catalyzes the reactions of carbonate dehydratase and DHA reductase independently of zinc and glutathione (GSH). The coupled reaction is capable of recycling a plant antioxidant ascorbate using ubiquitous compounds H(2)O and CO(2). Exhibits antioxidant activity. Able to scavenge 1,1-diphenyl-2-picrylhydrazyl (DPPH) radical. Exhibits immunomodulatory activity. Activates Toll-like receptor 4 signaling pathways by up-regulating the gene expression of pro-inflammatory cytokines, such as tumor necrosis factor alpha, interleukin-1 beta and interleukin-6, and chemokines RANTES and MCP-1, in mouse RAW 264.7 macrophages. Stimulates the phagocytosis of E.coli by the LPS-treated mouse macrophages. The protein is Dioscorin dioA3 of Dioscorea japonica (Japanese yam).